The primary structure comprises 178 residues: ATP synthase subunit delta (178 aa).

This sequence belongs to the ATPase delta chain family. In terms of assembly, F-type ATPases have 2 components, F(1) - the catalytic core - and F(0) - the membrane proton channel. F(1) has five subunits: alpha(3), beta(3), gamma(1), delta(1), epsilon(1). F(0) has three main subunits: a(1), b(2) and c(10-14). The alpha and beta chains form an alternating ring which encloses part of the gamma chain. F(1) is attached to F(0) by a central stalk formed by the gamma and epsilon chains, while a peripheral stalk is formed by the delta and b chains.

The protein localises to the cell membrane. Its function is as follows. F(1)F(0) ATP synthase produces ATP from ADP in the presence of a proton or sodium gradient. F-type ATPases consist of two structural domains, F(1) containing the extramembraneous catalytic core and F(0) containing the membrane proton channel, linked together by a central stalk and a peripheral stalk. During catalysis, ATP synthesis in the catalytic domain of F(1) is coupled via a rotary mechanism of the central stalk subunits to proton translocation. Functionally, this protein is part of the stalk that links CF(0) to CF(1). It either transmits conformational changes from CF(0) to CF(1) or is implicated in proton conduction. This is ATP synthase subunit delta from Anoxybacillus flavithermus (strain DSM 21510 / WK1).